A 771-amino-acid polypeptide reads, in one-letter code: Rho guanine nucleotide exchange factor 6 (771 aa).

The Calponin-homology (CH) domain maps to 1-111 (MNPEERLVTW…TLLAVNKATE (111 aa)). The segment at 115–157 (SERPCGRSSSLSAATSSQTNPQVAVPSTAPEQHSEEKAEMTEN) is disordered. Positions 122–131 (SSSLSAATSS) are enriched in low complexity. A Phosphoserine modification is found at S126. T133 is subject to Phosphothreonine. In terms of domain architecture, SH3 spans 159–218 (SHQLIVKARFNFKQTNEDELSVCKGDIIYVTRVEEGGWWEGTLNGRTGWFPSNYVREIKP). S224 bears the Phosphoserine mark. The DH domain occupies 240 to 420 (YYTVVLQNIL…KTLMGQCQDL (181 aa)). A PH domain is found at 442–547 (DIKTLGNVIF…WMEQLNRLTK (106 aa)). At S487 the chain carries Phosphoserine. Residues 556-572 (SKTSSSSCSTHSSFSST) are compositionally biased toward low complexity. Residues 556 to 580 (SKTSSSSCSTHSSFSSTGQPRGPLE) are disordered. A phosphoserine mark is found at S639 and S679.

Interacts with PAK kinases through the SH3 domain. Interacts with GIT1. Component of cytoplasmic complexes, which also contain PXN, GIT1 and PAK1. Interacts with BIN2. Identified in a complex with BIN2 and GIT2. Interacts with PARVB. Interacts with PARVG; the guanine nucleotide exchange factor activity of ARHGEF6 is essential for PARVG-induced enhancement of cell spreading. As to expression, detected in adult heart, spleen, lung, skeletal muscle, kidney and testis. Detected throughout embryogenesis.

It localises to the cell projection. Its subcellular location is the lamellipodium. In terms of biological role, acts as a RAC1 guanine nucleotide exchange factor (GEF). The polypeptide is Rho guanine nucleotide exchange factor 6 (Arhgef6) (Mus musculus (Mouse)).